Here is a 604-residue protein sequence, read N- to C-terminus: Elongation factor 4 1 (604 aa).

One can recognise a tr-type G domain in the interval 10 to 191 (EHIRNFCIIA…AIVDSVPAPT (182 aa)). Residues 22-27 (DHGKST) and 138-141 (NKID) contribute to the GTP site.

Belongs to the TRAFAC class translation factor GTPase superfamily. Classic translation factor GTPase family. LepA subfamily.

Its subcellular location is the cell inner membrane. The enzyme catalyses GTP + H2O = GDP + phosphate + H(+). Required for accurate and efficient protein synthesis under certain stress conditions. May act as a fidelity factor of the translation reaction, by catalyzing a one-codon backward translocation of tRNAs on improperly translocated ribosomes. Back-translocation proceeds from a post-translocation (POST) complex to a pre-translocation (PRE) complex, thus giving elongation factor G a second chance to translocate the tRNAs correctly. Binds to ribosomes in a GTP-dependent manner. This is Elongation factor 4 1 from Rhodopirellula baltica (strain DSM 10527 / NCIMB 13988 / SH1).